The following is a 335-amino-acid chain: Methionine import ATP-binding protein MetN (335 aa).

Residues 2 to 241 (IQFQRLHKSY…PQHPTTRRFV (240 aa)) enclose the ABC transporter domain. Residue 38-45 (GHSGAGKS) coordinates ATP.

It belongs to the ABC transporter superfamily. Methionine importer (TC 3.A.1.24) family. The complex is composed of two ATP-binding proteins (MetN), two transmembrane proteins (MetI) and a solute-binding protein (MetQ).

Its subcellular location is the cell inner membrane. It catalyses the reaction L-methionine(out) + ATP + H2O = L-methionine(in) + ADP + phosphate + H(+). The enzyme catalyses D-methionine(out) + ATP + H2O = D-methionine(in) + ADP + phosphate + H(+). Part of the ABC transporter complex MetNIQ involved in methionine import. Responsible for energy coupling to the transport system. In Xanthomonas campestris pv. campestris (strain 8004), this protein is Methionine import ATP-binding protein MetN.